Here is a 645-residue protein sequence, read N- to C-terminus: Rab11 family-interacting protein 1 (645 aa).

A C2 domain is found at 1–128 (MSLAASAGRG…DQGRRKKQWY (128 aa)). Over residues 171 to 187 (PFGKLKDKIKGKNKDSA) the composition is skewed to basic and acidic residues. Residues 171–215 (PFGKLKDKIKGKNKDSASDTASAIVPSVTPSVDSDDESFSKDKKK) are disordered. Phosphoserine is present on residues serine 186, serine 204, serine 208, and serine 236. The disordered stretch occupies residues 259 to 296 (WDDDAHEDESSSASDVMSHKRTSSTDQQPNQSNFSLPK). Positions 282-293 (STDQQPNQSNFS) are enriched in polar residues. 9 positions are modified to phosphoserine: serine 301, serine 316, serine 340, serine 342, serine 344, serine 346, serine 357, serine 358, and serine 383. Residues 330–545 (PEARSEIRES…PRPHPVKPMN (216 aa)) are disordered. 2 stretches are compositionally biased toward basic and acidic residues: residues 378–391 (SDRR…KDSM) and 418–432 (AARE…ESKK). Residue serine 434 is modified to Phosphoserine. Basic and acidic residues predominate over residues 459 to 487 (SEKEKERKGALVEAQLREEDLMRRPEKDA). Residues 573-635 (KKYQPSDPAF…EETPNILRVP (63 aa)) form the FIP-RBD domain. The interval 581 to 645 (AFAYAQLTHD…AQMGKKAGKM (65 aa)) is necessary for interaction with RAB4A and RAB11A, subcellular location and endosomal recycling.

In terms of assembly, homooligomer. Interacts with RAB11A, RAB11B, RAB25, RAB4A and RAB14.

Its subcellular location is the recycling endosome. The protein localises to the cytoplasmic vesicle. Functionally, a Rab11 effector protein involved in the endosomal recycling process. Also involved in controlling membrane trafficking along the phagocytic pathway and in phagocytosis. Interaction with RAB14 may function in the process of neurite formation. The chain is Rab11 family-interacting protein 1 (Rab11fip1) from Mus musculus (Mouse).